The chain runs to 462 residues: Asparagine--tRNA ligase (462 aa).

The protein belongs to the class-II aminoacyl-tRNA synthetase family. As to quaternary structure, homodimer.

The protein resides in the cytoplasm. The enzyme catalyses tRNA(Asn) + L-asparagine + ATP = L-asparaginyl-tRNA(Asn) + AMP + diphosphate + H(+). The polypeptide is Asparagine--tRNA ligase (Thermosynechococcus vestitus (strain NIES-2133 / IAM M-273 / BP-1)).